We begin with the raw amino-acid sequence, 329 residues long: Beta-ketoacyl-[acyl-carrier-protein] synthase III (329 aa).

Residues C123 and H256 contribute to the active site. The ACP-binding stretch occupies residues 257 to 261; that stretch reads QANIR. The active site involves N286.

Belongs to the thiolase-like superfamily. FabH family. In terms of assembly, homodimer.

The protein resides in the cytoplasm. It catalyses the reaction malonyl-[ACP] + acetyl-CoA + H(+) = 3-oxobutanoyl-[ACP] + CO2 + CoA. It participates in lipid metabolism; fatty acid biosynthesis. In terms of biological role, catalyzes the condensation reaction of fatty acid synthesis by the addition to an acyl acceptor of two carbons from malonyl-ACP. Catalyzes the first condensation reaction which initiates fatty acid synthesis and may therefore play a role in governing the total rate of fatty acid production. Possesses both acetoacetyl-ACP synthase and acetyl transacylase activities. Its substrate specificity determines the biosynthesis of branched-chain and/or straight-chain of fatty acids. The protein is Beta-ketoacyl-[acyl-carrier-protein] synthase III of Paraburkholderia phymatum (strain DSM 17167 / CIP 108236 / LMG 21445 / STM815) (Burkholderia phymatum).